A 198-amino-acid chain; its full sequence is MTYFLGLTGGIASGKSTADEFFKKKKIPIIDSDLIAHQIMEIGQNGYKAVVDYFGTDILNDDQTINRRKLGGIVFNDKAKLKKLNELTHPLVHQEIKQQMARYRANQEKLVVIDVPLLFESGFESLCNGVLAISITPELQIERLMKRNAFTKKEAVARISNQMPLSEKEKRATYVVANTGTIGDLEKKLSDLLQEIGR.

The DPCK domain maps to 4-198 (FLGLTGGIAS…LSDLLQEIGR (195 aa)). 12 to 17 (ASGKST) is an ATP binding site.

The protein belongs to the CoaE family.

The protein localises to the cytoplasm. It carries out the reaction 3'-dephospho-CoA + ATP = ADP + CoA + H(+). Its pathway is cofactor biosynthesis; coenzyme A biosynthesis; CoA from (R)-pantothenate: step 5/5. Functionally, catalyzes the phosphorylation of the 3'-hydroxyl group of dephosphocoenzyme A to form coenzyme A. This Lactobacillus johnsonii (strain CNCM I-12250 / La1 / NCC 533) protein is Dephospho-CoA kinase.